The chain runs to 320 residues: ATP-dependent 6-phosphofructokinase (320 aa).

ATP is bound by residues Gly11, 72–73 (RY), and 102–105 (GDGS). Residue Asp103 coordinates Mg(2+). Substrate contacts are provided by residues 125–127 (TID), Arg162, 169–171 (MGR), Glu222, Arg243, and 249–252 (HMQR). Asp127 serves as the catalytic Proton acceptor.

Belongs to the phosphofructokinase type A (PFKA) family. ATP-dependent PFK group I subfamily. Prokaryotic clade 'B1' sub-subfamily. In terms of assembly, homotetramer. It depends on Mg(2+) as a cofactor.

Its subcellular location is the cytoplasm. The catalysed reaction is beta-D-fructose 6-phosphate + ATP = beta-D-fructose 1,6-bisphosphate + ADP + H(+). The protein operates within carbohydrate degradation; glycolysis; D-glyceraldehyde 3-phosphate and glycerone phosphate from D-glucose: step 3/4. Allosterically activated by ADP and other diphosphonucleosides, and allosterically inhibited by phosphoenolpyruvate. Catalyzes the phosphorylation of D-fructose 6-phosphate to fructose 1,6-bisphosphate by ATP, the first committing step of glycolysis. This chain is ATP-dependent 6-phosphofructokinase, found in Lactiplantibacillus plantarum (strain ATCC BAA-793 / NCIMB 8826 / WCFS1) (Lactobacillus plantarum).